The following is a 642-amino-acid chain: Threonine--tRNA ligase (642 aa).

Residues Met1–Thr61 enclose the TGS domain. The tract at residues Asp243–Pro534 is catalytic. Residues Cys334, His385, and His511 each coordinate Zn(2+).

The protein belongs to the class-II aminoacyl-tRNA synthetase family. As to quaternary structure, homodimer. Zn(2+) serves as cofactor.

Its subcellular location is the cytoplasm. The enzyme catalyses tRNA(Thr) + L-threonine + ATP = L-threonyl-tRNA(Thr) + AMP + diphosphate + H(+). Its function is as follows. Catalyzes the attachment of threonine to tRNA(Thr) in a two-step reaction: L-threonine is first activated by ATP to form Thr-AMP and then transferred to the acceptor end of tRNA(Thr). Also edits incorrectly charged L-seryl-tRNA(Thr). The sequence is that of Threonine--tRNA ligase from Sodalis glossinidius (strain morsitans).